The primary structure comprises 347 residues: Homoisocitrate dehydrogenase (347 aa).

68–70 is an NADH binding site; sequence ITS. Residue S70 participates in (2R,3S)-homoisocitrate binding. S81 is subject to Phosphoserine. R87, R97, R128, Y135, K181, and N183 together coordinate (2R,3S)-homoisocitrate. N183 provides a ligand contact to NADH. The Mg(2+) site is built by D213, D237, and D241. NADH-binding positions include 270-274 and N282; that span reads GSAPD.

The protein belongs to the isocitrate and isopropylmalate dehydrogenases family. Mg(2+) serves as cofactor.

It carries out the reaction (2R,3S)-homoisocitrate + NAD(+) = 2-oxoadipate + CO2 + NADH. The enzyme catalyses (2R,3S)-iso(homo)2citrate + NAD(+) = 2-oxoheptanedioate + CO2 + NADH. It catalyses the reaction (2R,3S)-iso(homo)3citrate + NAD(+) = 2-oxosuberate + CO2 + NADH. It participates in organic acid metabolism; 2-oxosuberate biosynthesis. In terms of biological role, catalyzes the NAD-dependent oxidation and decarboxylation of (2R,3S)-homoisocitrate, (2R,3S)-homo(2)-isocitrate and (2R,3S)-homo(3)-isocitrate, into 2-oxoadipate, 2-oxopimelate (2-oxoheptanedioate), and 2-oxosuberate, respectively. All these substrates are intermediates in the biosynthesis of biotin and of 7-mercaptoheptanoate, a moiety of coenzyme B in methanoarchaea. Is also able to produce 2-oxoazelate from (2R,3S)-homo(4)-isocitrate in vitro, but this substrate is probably not physiologically relevant. Is unable to use any isomer of isocitrate or isopropylmalate as a substrate, and NADP as an oxidant. This Methanocaldococcus jannaschii (strain ATCC 43067 / DSM 2661 / JAL-1 / JCM 10045 / NBRC 100440) (Methanococcus jannaschii) protein is Homoisocitrate dehydrogenase (aksF).